The chain runs to 201 residues: Methylated-DNA--protein-cysteine methyltransferase (201 aa).

Y131, G132, and R146 together coordinate DNA. C163 (nucleophile; methyl group acceptor) is an active-site residue.

The protein belongs to the MGMT family.

The protein localises to the nucleus. The catalysed reaction is a 6-O-methyl-2'-deoxyguanosine in DNA + L-cysteinyl-[protein] = S-methyl-L-cysteinyl-[protein] + a 2'-deoxyguanosine in DNA. It carries out the reaction a 4-O-methyl-thymidine in DNA + L-cysteinyl-[protein] = a thymidine in DNA + S-methyl-L-cysteinyl-[protein]. In terms of biological role, involved in the cellular defense against the biological effects of O6-methylguanine (O6-MeG) and O4-methylthymine (O4-MeT) in DNA. Repairs the methylated nucleobase in DNA by stoichiometrically transferring the methyl group to a cysteine residue in the enzyme. This is a suicide reaction: the enzyme is irreversibly inactivated. The chain is Methylated-DNA--protein-cysteine methyltransferase (MGT1) from Lodderomyces elongisporus (strain ATCC 11503 / CBS 2605 / JCM 1781 / NBRC 1676 / NRRL YB-4239) (Yeast).